We begin with the raw amino-acid sequence, 407 residues long: Tryptophan synthase beta chain (407 aa).

Lysine 91 bears the N6-(pyridoxal phosphate)lysine mark.

The protein belongs to the TrpB family. Tetramer of two alpha and two beta chains. Pyridoxal 5'-phosphate serves as cofactor.

It catalyses the reaction (1S,2R)-1-C-(indol-3-yl)glycerol 3-phosphate + L-serine = D-glyceraldehyde 3-phosphate + L-tryptophan + H2O. It functions in the pathway amino-acid biosynthesis; L-tryptophan biosynthesis; L-tryptophan from chorismate: step 5/5. Its function is as follows. The beta subunit is responsible for the synthesis of L-tryptophan from indole and L-serine. The sequence is that of Tryptophan synthase beta chain from Streptococcus pneumoniae (strain JJA).